A 237-amino-acid polypeptide reads, in one-letter code: Alpha-S1-casein (237 aa).

The signal sequence occupies residues 1–15 (MKLLIFSCLVTLALA). The tract at residues 39-60 (EDPIPVSEASSSEESVHQLNRD) is disordered. Phosphoserine occurs at positions 79, 80, and 81.

Belongs to the alpha-casein family. As to expression, mammary gland specific. Secreted in milk.

It is found in the secreted. Functionally, important role in the capacity of milk to transport calcium phosphate. The sequence is that of Alpha-S1-casein (CSN1S1) from Notamacropus eugenii (Tammar wallaby).